Here is a 198-residue protein sequence, read N- to C-terminus: Transmembrane gamma-carboxyglutamic acid protein 2 (198 aa).

An N-terminal signal peptide occupies residues 1–17; the sequence is MRGRPSLLLVYMGLATC. Positions 18 to 51 are excised as a propeptide; sequence LDTSPHREQNQVLDIFLDAPEAQSFLVGRRRFPR. The Gla domain maps to 52-98; the sequence is ANHWDLELLTPGNLERECLEERCSWEEAREYFEDNTLTERFWESYTY. The Extracellular portion of the chain corresponds to 52–111; it reads ANHWDLELLTPGNLERECLEERCSWEEAREYFEDNTLTERFWESYTYNGKGGRGRVDVAG. Cysteine 69 and cysteine 74 are joined by a disulfide. The residue at position 72 (glutamate 72) is a 4-carboxyglutamate. A helical membrane pass occupies residues 112–132; that stretch reads LAVGLTSGILLIVLAGLGAFW. Residues 133–198 are Cytoplasmic-facing; that stretch reads YLHYRRRRLR…PPYSSLRRPH (66 aa). The tract at residues 156–198 is disordered; that stretch reads PLSPQTPQSPPLPPGLPTYEQALAASGVHDAPPPPYSSLRRPH. Pro residues predominate over residues 162 to 171; the sequence is PQSPPLPPGL. The LPXY motif; mediates binding to WW domain-containing proteins motif lies at 171–174; it reads LPTY. Residues 188–191 carry the PPXY motif; mediates binding to WW domain-containing proteins motif; sequence PPPY.

Interacts with NEDD4. Interacts with transcriptional coactivator YAP1. Post-translationally, gamma-carboxyglutamate residues are formed by vitamin K dependent carboxylation. These residues are essential for the binding of calcium.

It localises to the cell membrane. In Mus musculus (Mouse), this protein is Transmembrane gamma-carboxyglutamic acid protein 2 (Prrg2).